Reading from the N-terminus, the 937-residue chain is Protein translocase subunit SecA (937 aa).

ATP-binding positions include glutamine 90, 108–112, and aspartate 509; that span reads GEGKT.

Belongs to the SecA family. Monomer and homodimer. Part of the essential Sec protein translocation apparatus which comprises SecA, SecYEG and auxiliary proteins SecDF. Other proteins may also be involved.

The protein localises to the cell inner membrane. It is found in the cellular thylakoid membrane. It localises to the cytoplasm. The catalysed reaction is ATP + H2O + cellular proteinSide 1 = ADP + phosphate + cellular proteinSide 2.. In terms of biological role, part of the Sec protein translocase complex. Interacts with the SecYEG preprotein conducting channel. Has a central role in coupling the hydrolysis of ATP to the transfer of proteins into and across the cell membrane, serving as an ATP-driven molecular motor driving the stepwise translocation of polypeptide chains across the membrane. Probably participates in protein translocation into and across both the cytoplasmic and thylakoid membranes in cyanobacterial cells. This is Protein translocase subunit SecA from Parasynechococcus marenigrum (strain WH8102).